A 181-amino-acid polypeptide reads, in one-letter code: LEM domain-containing protein 1 (181 aa).

Residues Met-1–Pro-45 form the LEM domain. Residues Phe-152–Leu-172 form a helical; Signal-anchor for type II membrane protein membrane-spanning segment.

Testis-specific. Isoform 6 is detected in 17 of 18 colon cancer tissues examined.

Its subcellular location is the membrane. This is LEM domain-containing protein 1 (LEMD1) from Homo sapiens (Human).